A 236-amino-acid chain; its full sequence is Biosynthetic peptidoglycan transglycosylase (236 aa).

The chain crosses the membrane as a helical span at residues 12 to 31 (ALLWFAAGSVLVVLVLRWVP).

This sequence belongs to the glycosyltransferase 51 family.

Its subcellular location is the cell inner membrane. The enzyme catalyses [GlcNAc-(1-&gt;4)-Mur2Ac(oyl-L-Ala-gamma-D-Glu-L-Lys-D-Ala-D-Ala)](n)-di-trans,octa-cis-undecaprenyl diphosphate + beta-D-GlcNAc-(1-&gt;4)-Mur2Ac(oyl-L-Ala-gamma-D-Glu-L-Lys-D-Ala-D-Ala)-di-trans,octa-cis-undecaprenyl diphosphate = [GlcNAc-(1-&gt;4)-Mur2Ac(oyl-L-Ala-gamma-D-Glu-L-Lys-D-Ala-D-Ala)](n+1)-di-trans,octa-cis-undecaprenyl diphosphate + di-trans,octa-cis-undecaprenyl diphosphate + H(+). It functions in the pathway cell wall biogenesis; peptidoglycan biosynthesis. In terms of biological role, peptidoglycan polymerase that catalyzes glycan chain elongation from lipid-linked precursors. This chain is Biosynthetic peptidoglycan transglycosylase, found in Pseudomonas savastanoi pv. phaseolicola (strain 1448A / Race 6) (Pseudomonas syringae pv. phaseolicola (strain 1448A / Race 6)).